A 69-amino-acid chain; its full sequence is Protein transport protein Sec61 subunit gamma-1 (69 aa).

Met1 carries the post-translational modification N-acetylmethionine. Residues 1 to 32 (MDAIDSVVDPLRDFAKDSIRLVKRCHKPDRKE) lie on the Cytoplasmic side of the membrane. The chain crosses the membrane as a helical span at residues 33 to 61 (FTKVAVRTAIGFVVMGFVGFFVKLIFIPI). The Extracellular segment spans residues 62–69 (NNIIVGAT).

This sequence belongs to the SecE/SEC61-gamma family. In terms of assembly, heterotrimeric complex composed of SEC61-alpha, SEC61-beta and SEC61-gamma.

The protein resides in the endoplasmic reticulum membrane. Functionally, necessary for protein translocation in the endoplasmic reticulum. This Arabidopsis thaliana (Mouse-ear cress) protein is Protein transport protein Sec61 subunit gamma-1 (SEC61G1).